Reading from the N-terminus, the 272-residue chain is F-actin-capping protein subunit beta (272 aa).

The protein belongs to the F-actin-capping protein beta subunit family. Component of the F-actin capping complex, composed of a heterodimer of an alpha and a beta subunit.

The protein resides in the cytoplasm. It localises to the cytoskeleton. Its function is as follows. F-actin-capping proteins bind in a Ca(2+)-independent manner to the fast growing ends of actin filaments (barbed end) thereby blocking the exchange of subunits at these ends. Unlike other capping proteins (such as gelsolin and severin), these proteins do not sever actin filaments. The polypeptide is F-actin-capping protein subunit beta (acpA) (Dictyostelium discoideum (Social amoeba)).